Consider the following 296-residue polypeptide: 4-diphosphocytidyl-2-C-methyl-D-erythritol kinase (296 aa).

Lys22 is an active-site residue. Pro105–Ser115 contributes to the ATP binding site. The active site involves Asp147.

It belongs to the GHMP kinase family. IspE subfamily.

It catalyses the reaction 4-CDP-2-C-methyl-D-erythritol + ATP = 4-CDP-2-C-methyl-D-erythritol 2-phosphate + ADP + H(+). It participates in isoprenoid biosynthesis; isopentenyl diphosphate biosynthesis via DXP pathway; isopentenyl diphosphate from 1-deoxy-D-xylulose 5-phosphate: step 3/6. Catalyzes the phosphorylation of the position 2 hydroxy group of 4-diphosphocytidyl-2C-methyl-D-erythritol. The chain is 4-diphosphocytidyl-2-C-methyl-D-erythritol kinase from Photobacterium profundum (strain SS9).